The sequence spans 333 residues: HTH-type transcriptional repressor PurR (333 aa).

The region spanning 2 to 56 (ATIKDVAKMAGVSTTTVSHVINKTRFVAKETEQQVLQAIKNLNYSPSAVARSLKV) is the HTH lacI-type domain. Positions 4–23 (IKDVAKMAGVSTTTVSHVIN) form a DNA-binding region, H-T-H motif. A DNA-binding region spans residues 48-56 (SAVARSLKV). Residues Tyr73, Lys189, Thr191, Phe220, and Asp274 each coordinate hypoxanthine.

In terms of assembly, homodimer.

It participates in purine metabolism; purine nucleotide biosynthesis [regulation]. In terms of biological role, is the main repressor of the genes involved in the de novo synthesis of purine nucleotides, regulating purB, purC, purEK, purF, purHD, purL, purMN and guaBA expression. PurR is allosterically activated to bind its cognate DNA by binding the purine corepressors, hypoxanthine or guanine, thereby effecting transcription repression. In Histophilus somni (strain 2336) (Haemophilus somnus), this protein is HTH-type transcriptional repressor PurR.